The primary structure comprises 376 residues: Homeobox protein extradenticle (376 aa).

A disordered region spans residues 1 to 37 (MEDPNRMLAHTGGMMAPQGYGLSGQDDGQNAGSENEV). A PBC domain is found at 38–237 (RKQKDIGEIL…VMILRSRFLD (200 aa)). The interval 45-124 (EILQQIMSIS…EGVAGPEKGG (80 aa)) is PBC-A. Residues 127–237 (AAAASAAAAS…VMILRSRFLD (111 aa)) form a PBC-B region. The segment at residues 238-300 (ARRKRRNFSK…NKRIRYKKNI (63 aa)) is a DNA-binding region (homeobox; TALE-type). The span at 318–335 (ASPYSMAGPPSGTTTPMM) shows a compositional bias: low complexity. The segment at 318–376 (ASPYSMAGPPSGTTTPMMSPAPPQDSMGYPMGSGGYDQQQPYDNSMGGYDPNLHQDLSP) is disordered.

The protein belongs to the TALE/PBX homeobox family. As to quaternary structure, interacts with Ubx and hth. Prior to full germband retraction it is ubiquitously present, after germband retraction, mostly present in the anterior portion of the ventral nerve cord.

The protein localises to the nucleus. Functionally, transcription factor which acts with the selector homeodomain proteins altering the regulation of downstream target genes such as wingless (wg), teashirt (tsh) and decapentaplegic (dpp), thus affecting segmental identity. Delimits the eye field and prevent inappropriate eye development. Required for proper localization of chordotonal organs within the peripheral nervous system. This chain is Homeobox protein extradenticle (exd), found in Drosophila melanogaster (Fruit fly).